Consider the following 451-residue polypeptide: Jacalin-related lectin 35 (451 aa).

A2 carries the post-translational modification N-acetylalanine. 3 consecutive Jacalin-type lectin domains span residues 2 to 143, 156 to 297, and 306 to 448; these read AKKL…YIIP, LTKL…YIIP, and SNTI…NVAP.

Belongs to the jacalin lectin family. In terms of assembly, component of the PYK10 complex, at least composed of PYK10/BGLU23, BGLU21, BGLU22, JAL22, JAL23, PBP1/JAL30, PBP2/JAL31, JAL32, JAL33, JAL34, JAL35, GLL22 and GLL23.

This is Jacalin-related lectin 35 (JAL35) from Arabidopsis thaliana (Mouse-ear cress).